We begin with the raw amino-acid sequence, 84 residues long: Small ribosomal subunit protein uS17 (84 aa).

This sequence belongs to the universal ribosomal protein uS17 family. Part of the 30S ribosomal subunit.

In terms of biological role, one of the primary rRNA binding proteins, it binds specifically to the 5'-end of 16S ribosomal RNA. In Nitrosomonas europaea (strain ATCC 19718 / CIP 103999 / KCTC 2705 / NBRC 14298), this protein is Small ribosomal subunit protein uS17.